We begin with the raw amino-acid sequence, 219 residues long: Eukaryotic translation initiation factor 3 subunit K (219 aa).

The 163-residue stretch at 43–205 (YDLEANLAVL…SVKPKNIVEK (163 aa)) folds into the PCI domain.

Belongs to the eIF-3 subunit K family. In terms of assembly, component of the eukaryotic translation initiation factor 3 (eIF-3) complex, which is composed of 13 subunits: eif3a, eif3b, eif3c, eif3d, eif3e, eif3f, eif3g, eif3h, eif3i, eif3j, eif3k, eif3l and eif3m.

The protein localises to the nucleus. The protein resides in the cytoplasm. Component of the eukaryotic translation initiation factor 3 (eIF-3) complex, which is involved in protein synthesis of a specialized repertoire of mRNAs and, together with other initiation factors, stimulates binding of mRNA and methionyl-tRNAi to the 40S ribosome. The eIF-3 complex specifically targets and initiates translation of a subset of mRNAs involved in cell proliferation. The protein is Eukaryotic translation initiation factor 3 subunit K (eif3k) of Danio rerio (Zebrafish).